The chain runs to 23 residues: Apolipophorin-3 (23 aa).

The protein belongs to the insect apolipophorin-3 family. As to quaternary structure, equilibrium between a soluble monomer and a bound lipoprotein form. Apolipophorin-3 associates with lipophorin during lipid loading until each particle contains 9 or 14 molecules of apolipophorin-3. Hemolymph.

The protein localises to the secreted. Functionally, assists in the loading of diacylglycerol, generated from triacylglycerol stores in the fat body through the action of adipokinetic hormone, into lipophorin, the hemolymph lipoprotein. It increases the lipid carrying capacity of lipophorin by covering the expanding hydrophobic surface resulting from diacylglycerol uptake. It thus plays a critical role in the transport of lipids during flight in several species of insects. This is Apolipophorin-3 from Melanoplus sanguinipes (Migratory grasshopper).